Consider the following 74-residue polypeptide: ATP synthase subunit c (74 aa).

Helical transmembrane passes span 8 to 28 (FIGVGCMAIGMLGAALGVSNI) and 52 to 72 (IGAGLAEAMGLFSFVIAMLLI).

The protein belongs to the ATPase C chain family. In terms of assembly, F-type ATPases have 2 components, F(1) - the catalytic core - and F(0) - the membrane proton channel. F(1) has five subunits: alpha(3), beta(3), gamma(1), delta(1), epsilon(1). F(0) has three main subunits: a(1), b(2) and c(10-14). The alpha and beta chains form an alternating ring which encloses part of the gamma chain. F(1) is attached to F(0) by a central stalk formed by the gamma and epsilon chains, while a peripheral stalk is formed by the delta and b chains.

Its subcellular location is the cell inner membrane. In terms of biological role, f(1)F(0) ATP synthase produces ATP from ADP in the presence of a proton or sodium gradient. F-type ATPases consist of two structural domains, F(1) containing the extramembraneous catalytic core and F(0) containing the membrane proton channel, linked together by a central stalk and a peripheral stalk. During catalysis, ATP synthesis in the catalytic domain of F(1) is coupled via a rotary mechanism of the central stalk subunits to proton translocation. Key component of the F(0) channel; it plays a direct role in translocation across the membrane. A homomeric c-ring of between 10-14 subunits forms the central stalk rotor element with the F(1) delta and epsilon subunits. This is ATP synthase subunit c from Rickettsia bellii (strain RML369-C).